We begin with the raw amino-acid sequence, 658 residues long: Carnitine O-palmitoyltransferase 2, mitochondrial (658 aa).

A mitochondrion-targeting transit peptide spans 1-26 (MARLLTSSSALRWGAVSSSQSVGRAY). The Mitochondrial matrix segment spans residues 27–179 (SSGSPDTEYV…GYLEPEIFHL (153 aa)). The segment at residues 180 to 209 (NPAKSDTLTFRKLIRFVPSSLSWYGAYMVN) is an intramembrane region (note=Mitochondrial inner membrane). The Mitochondrial matrix segment spans residues 210–658 (AYPLDMSQYF…FTVLQDKPIK (449 aa)). The active-site Proton acceptor is His373. CoA is bound at residue 453 to 465 (GKELLKTQKLSPD). (R)-carnitine contacts are provided by Tyr487, Ser489, and Thr500.

This sequence belongs to the carnitine/choline acetyltransferase family.

It is found in the mitochondrion inner membrane. It catalyses the reaction (R)-carnitine + hexadecanoyl-CoA = O-hexadecanoyl-(R)-carnitine + CoA. It carries out the reaction octanoyl-CoA + (R)-carnitine = O-octanoyl-(R)-carnitine + CoA. The enzyme catalyses decanoyl-CoA + (R)-carnitine = O-decanoyl-(R)-carnitine + CoA. The catalysed reaction is dodecanoyl-CoA + (R)-carnitine = O-dodecanoyl-R-carnitine + CoA. It catalyses the reaction tetradecanoyl-CoA + (R)-carnitine = O-tetradecanoyl-(R)-carnitine + CoA. It carries out the reaction (R)-carnitine + octadecanoyl-CoA = O-octadecanoyl-(R)-carnitine + CoA. The enzyme catalyses eicosanoyl-CoA + (R)-carnitine = O-eicosanoyl-(R)-carnitine + CoA. The catalysed reaction is (9Z)-tetradecenoyl-CoA + (R)-carnitine = O-(9Z)-tetradecenoyl-(R)-carnitine + CoA. It catalyses the reaction (5Z)-tetradecenoyl-CoA + (R)-carnitine = O-(5Z)-tetradecenoyl-(R)-carnitine + CoA. It carries out the reaction (R)-carnitine + (9Z)-octadecenoyl-CoA = O-(9Z)-octadecenoyl-(R)-carnitine + CoA. The enzyme catalyses 4,8-dimethylnonanoyl-CoA + (R)-carnitine = O-4,8-dimethylnonanoyl-(R)-carnitine + CoA. It participates in lipid metabolism; fatty acid beta-oxidation. Functionally, involved in the intramitochondrial synthesis of acylcarnitines from accumulated acyl-CoA metabolites. Reconverts acylcarnitines back into the respective acyl-CoA esters that can then undergo beta-oxidation, an essential step for the mitochondrial uptake of long-chain fatty acids and their subsequent beta-oxidation in the mitochondrion. Active with medium (C8-C12) and long-chain (C14-C18) acyl-CoA esters. The polypeptide is Carnitine O-palmitoyltransferase 2, mitochondrial (cpt2) (Xenopus tropicalis (Western clawed frog)).